The chain runs to 406 residues: Endoplasmic reticulum resident protein 44 (406 aa).

An N-terminal signal peptide occupies residues Met-1 to Ala-29. Positions Glu-30–Gln-138 constitute a Thioredoxin domain. 2 disulfide bridges follow: Cys-189-Cys-241 and Cys-301-Cys-318. An interaction with ITPR1 region spans residues Trp-236–Arg-285. The interval Phe-360–Phe-387 is disordered. Residues Val-378–Phe-387 show a composition bias toward polar residues. The short motif at Arg-403–Leu-406 is the Prevents secretion from ER element.

Forms mixed disulfides with both ERO1A and ERO1B and cargo folding intermediates; the interactions with ERO1A and ERO1B result in their retention in the endoplasmic reticulum. Directly interacts with ITPR1 in a pH-, redox state- and calcium-dependent manner, but not with ITPR2 or ITPR3. The strength of this interaction inversely correlates with calcium concentration.

The protein resides in the endoplasmic reticulum lumen. In terms of biological role, mediates thiol-dependent retention in the early secretory pathway, forming mixed disulfides with substrate proteins through its conserved CRFS motif. Inhibits the calcium channel activity of ITPR1. May have a role in the control of oxidative protein folding in the endoplasmic reticulum. Required to retain ERO1A and ERO1B in the endoplasmic reticulum. The chain is Endoplasmic reticulum resident protein 44 (ERP44) from Bos taurus (Bovine).